We begin with the raw amino-acid sequence, 284 residues long: Four and a half LIM domains protein 5 (284 aa).

A C4-type zinc finger spans residues 8 to 32 (CQYCTASLLGKKYVLKDDSLFCVTC). 4 consecutive LIM zinc-binding domains span residues 39-100 (NYCE…ECSS), 101-160 (KCFH…KEFA), 161-220 (HYCN…LYAN), and 223-283 (VACS…MDSD).

Interacts with CREM (via the third LIM domain). Interacts (via second LIM domain) with SPAG8.

The protein localises to the nucleus. Functionally, may be involved in the regulation of spermatogenesis. Stimulates CREM transcriptional activity in a phosphorylation-independent manner. The protein is Four and a half LIM domains protein 5 (FHL5) of Macaca fascicularis (Crab-eating macaque).